Here is a 395-residue protein sequence, read N- to C-terminus: 8-amino-7-oxononanoate synthase (395 aa).

Arg24 contacts substrate. Residue 111–112 (GF) coordinates pyridoxal 5'-phosphate. Residue His136 coordinates substrate. Residues Ser184, 209-212 (DDAH), and 240-243 (TLSK) each bind pyridoxal 5'-phosphate. Lys243 is modified (N6-(pyridoxal phosphate)lysine). Thr357 serves as a coordination point for substrate.

This sequence belongs to the class-II pyridoxal-phosphate-dependent aminotransferase family. BioF subfamily. In terms of assembly, homodimer. Pyridoxal 5'-phosphate is required as a cofactor.

It carries out the reaction 6-carboxyhexanoyl-[ACP] + L-alanine + H(+) = (8S)-8-amino-7-oxononanoate + holo-[ACP] + CO2. Its pathway is cofactor biosynthesis; biotin biosynthesis. In terms of biological role, catalyzes the decarboxylative condensation of pimeloyl-[acyl-carrier protein] and L-alanine to produce 8-amino-7-oxononanoate (AON), [acyl-carrier protein], and carbon dioxide. The protein is 8-amino-7-oxononanoate synthase of Alkaliphilus metalliredigens (strain QYMF).